The sequence spans 61 residues: DNA-directed RNA polymerase subunit Rpo10 (61 aa).

Residues cysteine 6, cysteine 9, cysteine 42, and cysteine 43 each coordinate Zn(2+).

It belongs to the archaeal Rpo10/eukaryotic RPB10 RNA polymerase subunit family. As to quaternary structure, part of the RNA polymerase complex. It depends on Zn(2+) as a cofactor.

The protein resides in the cytoplasm. It catalyses the reaction RNA(n) + a ribonucleoside 5'-triphosphate = RNA(n+1) + diphosphate. Functionally, DNA-dependent RNA polymerase (RNAP) catalyzes the transcription of DNA into RNA using the four ribonucleoside triphosphates as substrates. The sequence is that of DNA-directed RNA polymerase subunit Rpo10 from Methanothrix thermoacetophila (strain DSM 6194 / JCM 14653 / NBRC 101360 / PT) (Methanosaeta thermophila).